The chain runs to 290 residues: Putative speedy protein-like protein 3 (290 aa).

The segment at 16–50 (GVDPSPPCRSLGWKRKKEWSDESEEEPEKELAPEP) is disordered. Acidic residues predominate over residues 36-50 (DESEEEPEKELAPEP).

This sequence belongs to the Speedy/Ringo family.

The chain is Putative speedy protein-like protein 3 from Homo sapiens (Human).